The primary structure comprises 905 residues: Respiratory burst oxidase homolog protein B (905 aa).

Disordered stretches follow at residues 1–46 (MADL…KTAR) and 69–134 (EVRG…VRKR). Topologically, residues 1 to 355 (MADLEAGMVA…MYFLEENWKR (355 aa)) are cytoplasmic. The segment covering 29–44 (IPNSGNLGSSNRSTKT) has biased composition (polar residues). A compositionally biased stretch (gly residues) spans 75–84 (EGGSGHGTGF). Polar residues predominate over residues 91-108 (SPSSKSGKLTSKLRQVTN). EF-hand-like regions lie at residues 172 to 180 (QVDGVLLRS) and 206 to 217 (RGIVKQVLTKDE). EF-hand domains are found at residues 229–264 (GFDNRLRTFFDMVDKNADGRLTAEEVKEIIALSASA) and 273–308 (RADEYTALIMEELDPTNLGYIEMEDLEALLLQSPSE). Ca(2+)-binding residues include D242, N244, D246, R248, and E253. Residues 356-376 (SWVMTLWISICIALFIWKFIQ) traverse the membrane as a helical segment. Residues 377–440 (YRNRAVFGIM…FNDNINFHKV (64 aa)) lie on the Extracellular side of the membrane. One can recognise a Ferric oxidoreductase domain in the interval 395-551 (GAAETLKFNM…HLFVIVYTLL (157 aa)). The helical transmembrane segment at 441–461 (IAAGVAVGVALHAGAHLTCDF) threads the bilayer. The Cytoplasmic portion of the chain corresponds to 462–496 (PRLLHASDAQYELMKPFFGEKRPPNYWWFVKGTEG). A helical transmembrane segment spans residues 497-517 (WTGVVMVVLMAIAFTLAQPWF). Over 518-539 (RRNKLKDSNPLKKMTGFNAFWF) the chain is Extracellular. A helical membrane pass occupies residues 540 to 560 (THHLFVIVYTLLFVHGTCLYL). The Cytoplasmic portion of the chain corresponds to 561–568 (SRKWYKKT). Residues 569–586 (TWMYLAVPVVLYVSERIL) form a helical membrane-spanning segment. Positions 587-715 (RLFRSHDAVG…DGPYGAPAQD (129 aa)) constitute an FAD-binding FR-type domain. The Extracellular portion of the chain corresponds to 587-717 (RLFRSHDAVG…PYGAPAQDYR (131 aa)). A helical transmembrane segment spans residues 718–738 (EYDVLLLIGLGIGATPLISIV). The Cytoplasmic portion of the chain corresponds to 739–905 (KDVLNHIQGE…TRFDFHKENF (167 aa)).

This sequence belongs to the RBOH (TC 5.B.1.3) family. In terms of assembly, monomer and homodimer, stabilized by swapping the EF-hand motifs. Interacts with GTP-bound RAC1.

It is found in the membrane. Functionally, calcium-dependent NADPH oxidase that generates superoxide. The chain is Respiratory burst oxidase homolog protein B (RBOHB) from Oryza sativa subsp. japonica (Rice).